The sequence spans 206 residues: Large ribosomal subunit protein uL13z (206 aa).

This sequence belongs to the universal ribosomal protein uL13 family.

This Arabidopsis thaliana (Mouse-ear cress) protein is Large ribosomal subunit protein uL13z (RPL13AA).